A 311-amino-acid chain; its full sequence is Maspardin (311 aa).

The 74-residue stretch at 86-159 (EFCDGFRKLL…NSFWLMPSFM (74 aa)) folds into the AB hydrolase-1 domain.

Belongs to the AB hydrolase superfamily.

It localises to the cytoplasm. This is Maspardin (spg21) from Danio rerio (Zebrafish).